Here is a 209-residue protein sequence, read N- to C-terminus: Chloramphenicol acetyltransferase (209 aa).

The Proton acceptor role is filled by H189.

This sequence belongs to the chloramphenicol acetyltransferase family. Homotrimer.

It catalyses the reaction chloramphenicol + acetyl-CoA = chloramphenicol 3-acetate + CoA. This enzyme is an effector of chloramphenicol resistance in bacteria. In Staphylococcus aureus, this protein is Chloramphenicol acetyltransferase.